We begin with the raw amino-acid sequence, 312 residues long: Triacylglycerol lipase (312 aa).

The first 25 residues, 1–25 (MNKIIILIALSLFSSSIWAGTSAHA), serve as a signal peptide directing secretion. Residues 37-228 (PIVLVHGLFG…VNGVRYYSWS (192 aa)) form the AB hydrolase-1 domain. Position 44 (Leu44) interacts with substrate. Ser110 functions as the Nucleophile in the catalytic mechanism. Position 111 (His111) interacts with substrate. A disulfide bridge connects residues Cys212 and Cys262. Residue Asp238 participates in Ca(2+) binding. Catalysis depends on charge relay system residues Asp256 and His278. Ca(2+) is bound by residues Asp280, Gly284, and Ile288.

This sequence belongs to the AB hydrolase superfamily. Pseudomonas lipase family. In terms of assembly, monomer. Ca(2+) is required as a cofactor.

It is found in the secreted. It carries out the reaction a triacylglycerol + H2O = a diacylglycerol + a fatty acid + H(+). In terms of biological role, catalyzes the hydrolysis of triacylglycerol. In Vibrio cholerae serotype O1 (strain ATCC 39315 / El Tor Inaba N16961), this protein is Triacylglycerol lipase.